A 180-amino-acid polypeptide reads, in one-letter code: Ribulose bisphosphate carboxylase small subunit, chloroplastic (180 aa).

The N-terminal 56 residues, 1–56, are a transit peptide targeting the chloroplast; that stretch reads MASSVLSSAAVATRSNVAQANMVAPFTGLKSAASFPVSRKQNLDITSIASNGGRVQ.

This sequence belongs to the RuBisCO small chain family. As to quaternary structure, heterohexadecamer of 8 large and 8 small subunits. (Microbial infection) Binds to tobamovirus movement protein at the plasmodesmata (e.g. tomato mosaic virus MP AC P69513); this interaction seems required for viral systemic movement.

The protein resides in the plastid. Its subcellular location is the chloroplast. The protein localises to the cell junction. It is found in the plasmodesma. RuBisCO catalyzes two reactions: the carboxylation of D-ribulose 1,5-bisphosphate, the primary event in carbon dioxide fixation, as well as the oxidative fragmentation of the pentose substrate. Both reactions occur simultaneously and in competition at the same active site. Although the small subunit is not catalytic it is essential for maximal activity. Involved in antiviral defenses. In terms of biological role, (Microbial infection) Required for tobamovirus movement (e.g. tobacco mosaic virus (TMV)). The protein is Ribulose bisphosphate carboxylase small subunit, chloroplastic of Nicotiana benthamiana.